The sequence spans 168 residues: Protein A40 (168 aa).

Topologically, residues 1 to 9 are cytoplasmic; that stretch reads MNKPKTDYA. A helical; Signal-anchor for type II membrane protein transmembrane segment spans residues 10–30; sequence GYACCVICGLIVGIIFTATLL. Residues 31 to 168 lie on the Extracellular side of the membrane; sequence KVVERKLVHT…TTFLSYHYFG (138 aa). In terms of domain architecture, C-type lectin spans 63 to 168; that stretch reads YNNKCIHLST…TTFLSYHYFG (106 aa).

This sequence belongs to the poxviridae A40 protein family.

The protein localises to the host membrane. The sequence is that of Protein A40 from Homo sapiens (Human).